Reading from the N-terminus, the 236-residue chain is Bacterial rhodopsin CSR3 (236 aa).

Residues M1–A3 lie on the Extracellular side of the membrane. The helical transmembrane segment at V4 to L25 threads the bilayer. Topologically, residues Y26–E34 are cytoplasmic. The helical transmembrane segment at R35–A56 threads the bilayer. At F57–V70 the chain is on the extracellular side. A helical transmembrane segment spans residues G71–A92. The Cytoplasmic segment spans residues G93–S95. The chain crosses the membrane as a helical span at residues R96–V118. At A119–T122 the chain is on the extracellular side. A helical transmembrane segment spans residues L123–V150. The Cytoplasmic segment spans residues P151–D153. The helical transmembrane segment at P154–G181 threads the bilayer. Residues P182–T189 lie on the Extracellular side of the membrane. The helical transmembrane segment at Y190–K222 threads the bilayer. At K205 the chain carries N6-(retinylidene)lysine. The Cytoplasmic portion of the chain corresponds to L223 to D236.

It belongs to the archaeal/bacterial/fungal opsin family.

It localises to the cell membrane. The polypeptide is Bacterial rhodopsin CSR3 (Haloarcula vallismortis (Halobacterium vallismortis)).